Consider the following 444-residue polypeptide: F-box protein At1g53790 (444 aa).

An F-box domain is found at 76–125 (VSCFRYIPIDLLMDIFSRVPAKSIARFRCVSKLWESILCRPDFKELFMTM).

This chain is F-box protein At1g53790, found in Arabidopsis thaliana (Mouse-ear cress).